The chain runs to 262 residues: Electron transfer flavoprotein beta subunit lysine methyltransferase (262 aa).

A mitochondrion-targeting transit peptide spans 1–38; it reads MALSLGWKAHRNHCGLLLQALRSSGLLLFPCGQCPWRG.

The protein belongs to the methyltransferase superfamily. ETFBKMT family. Interacts with HSPD1; this protein may possibly be a methylation substrate.

The protein resides in the cytoplasm. Its subcellular location is the mitochondrion matrix. It catalyses the reaction L-lysyl-[protein] + 3 S-adenosyl-L-methionine = N(6),N(6),N(6)-trimethyl-L-lysyl-[protein] + 3 S-adenosyl-L-homocysteine + 3 H(+). Protein-lysine methyltransferase that selectively trimethylates the flavoprotein ETFB in mitochondria. Thereby, may negatively regulate the function of ETFB in electron transfer from Acyl-CoA dehydrogenases to the main respiratory chain. This chain is Electron transfer flavoprotein beta subunit lysine methyltransferase, found in Homo sapiens (Human).